We begin with the raw amino-acid sequence, 111 residues long: Probable U2 small nuclear ribonucleoprotein B'' (111 aa).

One can recognise an RRM domain in the interval 4-83; that stretch reads NTLYVNNLND…KEMKIQYAHS (80 aa).

As to quaternary structure, belongs to the 40S cdc5-associated complex (or cwf complex), a spliceosome sub-complex reminiscent of a late-stage spliceosome composed of the U2, U5 and U6 snRNAs and at least brr2, cdc5, cwf2/prp3, cwf3/syf1, cwf4/syf3, cwf5/ecm2, spp42/cwf6, cwf7/spf27, cwf8, cwf9, cwf10, cwf11, cwf12, prp45/cwf13, cwf14, cwf15, cwf16, cwf17, cwf18, cwf19, cwf20, cwf21, cwf22, cwf23, cwf24, cwf25, cwf26, cyp7/cwf27, cwf28, cwf29/ist3, lea1, msl1, prp5/cwf1, prp10, prp12/sap130, prp17, prp22, sap61, sap62, sap114, sap145, slu7, smb1, smd1, smd3, smf1, smg1 and syf2.

Its subcellular location is the nucleus. In terms of biological role, involved in pre-mRNA splicing. This protein is associated with snRNP U2. It binds stem loop IV of U2 snRNA. This Schizosaccharomyces pombe (strain 972 / ATCC 24843) (Fission yeast) protein is Probable U2 small nuclear ribonucleoprotein B'' (msl1).